The sequence spans 504 residues: Probable protein phosphatase 2C 18 (504 aa).

The disordered stretch occupies residues 1–49; sequence MGLCYSVDRTTGKEPGEASSTATTAETVEERSGSGRWRRPRDLKGGGDI. The segment covering 17-26 has biased composition (low complexity); it reads EASSTATTAE. The PPM-type phosphatase domain maps to 67-399; sequence IACLYTQQGK…DDCTVVCLFL (333 aa). Mn(2+) is bound by residues Asp103, Gly104, Asp344, and Asp390. The interval 410-435 is disordered; that stretch reads TNVKKDSPKEESIESVTNSTSKEEDE. Basic and acidic residues predominate over residues 412–421; sequence VKKDSPKEES.

This sequence belongs to the PP2C family. It depends on Mg(2+) as a cofactor. Mn(2+) is required as a cofactor.

The catalysed reaction is O-phospho-L-seryl-[protein] + H2O = L-seryl-[protein] + phosphate. The enzyme catalyses O-phospho-L-threonyl-[protein] + H2O = L-threonyl-[protein] + phosphate. The chain is Probable protein phosphatase 2C 18 from Arabidopsis thaliana (Mouse-ear cress).